Consider the following 151-residue polypeptide: uncharacterized protein (151 aa).

The Response regulatory domain maps to 2–133; that stretch reads KTLIVEDNPK…VFVEAVHYSQ (132 aa). D53 bears the 4-aspartylphosphate mark.

This is an uncharacterized protein from Sinorhizobium fredii (strain NBRC 101917 / NGR234).